Reading from the N-terminus, the 180-residue chain is Large ribosomal subunit protein uL6 (180 aa).

It belongs to the universal ribosomal protein uL6 family. In terms of assembly, part of the 50S ribosomal subunit.

Functionally, this protein binds to the 23S rRNA, and is important in its secondary structure. It is located near the subunit interface in the base of the L7/L12 stalk, and near the tRNA binding site of the peptidyltransferase center. In Cutibacterium acnes (strain DSM 16379 / KPA171202) (Propionibacterium acnes), this protein is Large ribosomal subunit protein uL6.